The sequence spans 419 residues: Serine hydroxymethyltransferase (419 aa).

(6S)-5,6,7,8-tetrahydrofolate is bound by residues Leu-121 and 125 to 127 (GHL). Lys-229 carries the N6-(pyridoxal phosphate)lysine modification. 354-356 (SPF) is a binding site for (6S)-5,6,7,8-tetrahydrofolate.

It belongs to the SHMT family. Homodimer. The cofactor is pyridoxal 5'-phosphate.

Its subcellular location is the cytoplasm. The catalysed reaction is (6R)-5,10-methylene-5,6,7,8-tetrahydrofolate + glycine + H2O = (6S)-5,6,7,8-tetrahydrofolate + L-serine. It functions in the pathway one-carbon metabolism; tetrahydrofolate interconversion. The protein operates within amino-acid biosynthesis; glycine biosynthesis; glycine from L-serine: step 1/1. In terms of biological role, catalyzes the reversible interconversion of serine and glycine with tetrahydrofolate (THF) serving as the one-carbon carrier. This reaction serves as the major source of one-carbon groups required for the biosynthesis of purines, thymidylate, methionine, and other important biomolecules. Also exhibits THF-independent aldolase activity toward beta-hydroxyamino acids, producing glycine and aldehydes, via a retro-aldol mechanism. The chain is Serine hydroxymethyltransferase from Coxiella burnetii (strain CbuK_Q154) (Coxiella burnetii (strain Q154)).